The primary structure comprises 74 residues: Toxin BmKaTx17 (74 aa).

The signal sequence occupies residues 1 to 8; the sequence is LLMTGVES. The 63-residue stretch at 10-72 folds into the LCN-type CS-alpha/beta domain; sequence RDAYIAKNYN…KPIRIPGKCH (63 aa). Intrachain disulfides connect cysteine 20-cysteine 71, cysteine 24-cysteine 44, cysteine 30-cysteine 54, and cysteine 34-cysteine 56. Positions 73–74 are cleaved as a propeptide — removed by a carboxypeptidase; the sequence is RR.

The protein belongs to the long (4 C-C) scorpion toxin superfamily. Sodium channel inhibitor family. Alpha subfamily. Expressed by the venom gland.

Its subcellular location is the secreted. In terms of biological role, alpha toxins bind voltage-independently at site-3 of sodium channels (Nav) and inhibit the inactivation of the activated channels, thereby blocking neuronal transmission. The polypeptide is Toxin BmKaTx17 (Olivierus martensii (Manchurian scorpion)).